Reading from the N-terminus, the 137-residue chain is Small heat shock protein IbpA (137 aa).

Residues 28 to 137 (NQSNGGYPPY…SLKPRRIEIK (110 aa)) form the sHSP domain.

It belongs to the small heat shock protein (HSP20) family. As to quaternary structure, monomer. Forms homomultimers of about 100-150 subunits at optimal growth temperatures. Conformation changes to monomers at high temperatures or high ionic concentrations.

It localises to the cytoplasm. Its function is as follows. Associates with aggregated proteins, together with IbpB, to stabilize and protect them from irreversible denaturation and extensive proteolysis during heat shock and oxidative stress. Aggregated proteins bound to the IbpAB complex are more efficiently refolded and reactivated by the ATP-dependent chaperone systems ClpB and DnaK/DnaJ/GrpE. Its activity is ATP-independent. The chain is Small heat shock protein IbpA from Yersinia pseudotuberculosis serotype O:1b (strain IP 31758).